Here is a 295-residue protein sequence, read N- to C-terminus: MDQKQIEEIVRSVMASMGQAAPAPSEAKCATTTCAAPVTSESCALDLGSAEAKAWIGVENPHRADVLTELRRSTVARVCTGRAGPRPRTQALLRFLADHSRSKDTVLKEVPEEWVKAQGLLEVRSEISDKNLYLTRPDMGRRLCAEAVEALKAQCVANPDVQVVISDGLSTDAITVNYEEILPPLMAGLKQAGLKVGTPFFVRYGRVKIEDQIGELLGAKVVILLVGERPGLGQSESLSCYAVYSPCMATTVEADRTCISNIHQGGTPPVEAAAVIVDLAKRMLEQKASGINMTR.

Positions 207, 228, and 258 each coordinate adenosylcob(III)alamin.

Belongs to the EutC family. As to quaternary structure, the basic unit is a heterodimer which dimerizes to form tetramers. The heterotetramers trimerize; 6 large subunits form a core ring with 6 small subunits projecting outwards. Adenosylcob(III)alamin serves as cofactor.

The protein localises to the bacterial microcompartment. The catalysed reaction is ethanolamine = acetaldehyde + NH4(+). It participates in amine and polyamine degradation; ethanolamine degradation. Catalyzes the deamination of various vicinal amino-alcohols to oxo compounds. Allows this organism to utilize ethanolamine as the sole source of nitrogen and carbon in the presence of external vitamin B12. In Escherichia fergusonii (strain ATCC 35469 / DSM 13698 / CCUG 18766 / IAM 14443 / JCM 21226 / LMG 7866 / NBRC 102419 / NCTC 12128 / CDC 0568-73), this protein is Ethanolamine ammonia-lyase small subunit.